We begin with the raw amino-acid sequence, 523 residues long: 2-isopropylmalate synthase (523 aa).

Positions V5–W267 constitute a Pyruvate carboxyltransferase domain. Mn(2+) contacts are provided by D14, H202, H204, and N238. The tract at residues R392–V523 is regulatory domain.

It belongs to the alpha-IPM synthase/homocitrate synthase family. LeuA type 1 subfamily. As to quaternary structure, homodimer. The cofactor is Mn(2+).

It is found in the cytoplasm. The enzyme catalyses 3-methyl-2-oxobutanoate + acetyl-CoA + H2O = (2S)-2-isopropylmalate + CoA + H(+). The protein operates within amino-acid biosynthesis; L-leucine biosynthesis; L-leucine from 3-methyl-2-oxobutanoate: step 1/4. Its function is as follows. Catalyzes the condensation of the acetyl group of acetyl-CoA with 3-methyl-2-oxobutanoate (2-ketoisovalerate) to form 3-carboxy-3-hydroxy-4-methylpentanoate (2-isopropylmalate). This is 2-isopropylmalate synthase from Salmonella choleraesuis (strain SC-B67).